A 157-amino-acid chain; its full sequence is Protein Smg (157 aa).

It belongs to the Smg family.

This Buchnera aphidicola subsp. Acyrthosiphon pisum (strain 5A) protein is Protein Smg.